A 279-amino-acid polypeptide reads, in one-letter code: HTH-type transcriptional regulator HdfR (279 aa).

An HTH lysR-type domain is found at 1-58; sequence MDTELLKTFLEVSRTRHFGRAAESLYLTQSAVSFRIRQLENQLGVNLFTRHRNNIRLT. The segment at residues 18-37 is a DNA-binding region (H-T-H motif); that stretch reads FGRAAESLYLTQSAVSFRIR.

Belongs to the LysR transcriptional regulatory family.

Functionally, negatively regulates the transcription of the flagellar master operon flhDC by binding to the upstream region of the operon. The chain is HTH-type transcriptional regulator HdfR from Escherichia coli O7:K1 (strain IAI39 / ExPEC).